A 280-amino-acid polypeptide reads, in one-letter code: Large ribosomal subunit protein uL2 (280 aa).

Disordered stretches follow at residues Leu-33–Gly-55 and Asp-199–Gln-266. Positions Gly-209 to Ser-219 are enriched in basic residues.

The protein belongs to the universal ribosomal protein uL2 family. In terms of assembly, part of the 50S ribosomal subunit. Forms a bridge to the 30S subunit in the 70S ribosome.

In terms of biological role, one of the primary rRNA binding proteins. Required for association of the 30S and 50S subunits to form the 70S ribosome, for tRNA binding and peptide bond formation. It has been suggested to have peptidyltransferase activity; this is somewhat controversial. Makes several contacts with the 16S rRNA in the 70S ribosome. The chain is Large ribosomal subunit protein uL2 from Ruegeria sp. (strain TM1040) (Silicibacter sp.).